A 176-amino-acid polypeptide reads, in one-letter code: Late lactation protein A (176 aa).

The first 18 residues, 1–18, serve as a signal peptide directing secretion; sequence MRVLFLTISLSLFSIIHA. Cys-78 and Cys-171 are oxidised to a cystine.

The protein belongs to the calycin superfamily. Lipocalin family. As to expression, mammary gland specific. Secreted in milk.

The protein resides in the secreted. In terms of biological role, probably serves a role in the transport of a small ligand released during the hydrolysis of milk fat. In Notamacropus eugenii (Tammar wallaby), this protein is Late lactation protein A (LLPA).